The following is a 219-amino-acid chain: Charged multivesicular body protein 5 (219 aa).

Residues Met-1–Pro-10 are compositionally biased toward basic residues. A disordered region spans residues Met-1 to Ile-21. Positions Ser-26 to Asp-179 form a coiled coil. A Phosphoserine modification is found at Ser-86. The interval Ser-188–Ser-219 is disordered.

The protein belongs to the SNF7 family. As to quaternary structure, probable peripherally associated component of the endosomal sorting required for transport complex III (ESCRT-III). ESCRT-III components are thought to multimerize to form a flat lattice on the perimeter membrane of the endosome. Several assembly forms of ESCRT-III may exist that interact and act sequentially. Interacts with VTA1. Interacts with CHMP2A. Interacts with VTA1; the interaction involves soluble CHMP5. Interacts with NOD2. Interacts with BROX. ISGylated. Isgylation inhibits its interaction with VTA1.

Its subcellular location is the cytoplasm. It is found in the cytosol. It localises to the endosome membrane. The protein localises to the midbody. In terms of biological role, probable peripherally associated component of the endosomal sorting required for transport complex III (ESCRT-III) which is involved in multivesicular bodies (MVBs) formation and sorting of endosomal cargo proteins into MVBs. MVBs contain intraluminal vesicles (ILVs) that are generated by invagination and scission from the limiting membrane of the endosome and mostly are delivered to lysosomes enabling degradation of membrane proteins, such as stimulated growth factor receptors, lysosomal enzymes and lipids. The MVB pathway appears to require the sequential function of ESCRT-O, -I,-II and -III complexes. ESCRT-III proteins mostly dissociate from the invaginating membrane before the ILV is released. The ESCRT machinery also functions in topologically equivalent membrane fission events, such as the terminal stages of cytokinesis. ESCRT-III proteins are believed to mediate the necessary vesicle extrusion and/or membrane fission activities, possibly in conjunction with the AAA ATPase VPS4. This Mus musculus (Mouse) protein is Charged multivesicular body protein 5 (Chmp5).